The following is a 424-amino-acid chain: Probable methyltransferase EP424R (424 aa).

The Adrift-type SAM-dependent 2'-O-MTase domain occupies 103–315; that stretch reads QIVTNAWLKM…TYIVGKNRLR (213 aa). S-adenosyl-L-methionine is bound by residues Gly135 and Asp228. Catalysis depends on Lys268, which acts as the Proton acceptor.

Its subcellular location is the virion. The chain is Probable methyltransferase EP424R from Ornithodoros (relapsing fever ticks).